Consider the following 874-residue polypeptide: Alanine--tRNA ligase (874 aa).

Residues His562, His566, Cys663, and His667 each coordinate Zn(2+).

This sequence belongs to the class-II aminoacyl-tRNA synthetase family. It depends on Zn(2+) as a cofactor.

Its subcellular location is the cytoplasm. It carries out the reaction tRNA(Ala) + L-alanine + ATP = L-alanyl-tRNA(Ala) + AMP + diphosphate. In terms of biological role, catalyzes the attachment of alanine to tRNA(Ala) in a two-step reaction: alanine is first activated by ATP to form Ala-AMP and then transferred to the acceptor end of tRNA(Ala). Also edits incorrectly charged Ser-tRNA(Ala) and Gly-tRNA(Ala) via its editing domain. The protein is Alanine--tRNA ligase of Bordetella parapertussis (strain 12822 / ATCC BAA-587 / NCTC 13253).